The primary structure comprises 305 residues: Tyrosine recombinase XerC (305 aa).

Residues 1-93 (MVLDGFAAHF…SWRQYCVWLV (93 aa)) enclose the Core-binding (CB) domain. A Tyr recombinase domain is found at 114 to 294 (RVPKALPQEW…DFDHIARLYD (181 aa)). Catalysis depends on residues arginine 155, lysine 179, histidine 246, arginine 249, and histidine 272. The active-site O-(3'-phospho-DNA)-tyrosine intermediate is the tyrosine 281.

This sequence belongs to the 'phage' integrase family. XerC subfamily. In terms of assembly, forms a cyclic heterotetrameric complex composed of two molecules of XerC and two molecules of XerD.

It is found in the cytoplasm. Site-specific tyrosine recombinase, which acts by catalyzing the cutting and rejoining of the recombining DNA molecules. The XerC-XerD complex is essential to convert dimers of the bacterial chromosome into monomers to permit their segregation at cell division. It also contributes to the segregational stability of plasmids. The polypeptide is Tyrosine recombinase XerC (Neisseria meningitidis serogroup C / serotype 2a (strain ATCC 700532 / DSM 15464 / FAM18)).